A 683-amino-acid chain; its full sequence is FAD-binding monooxygenase ausC (683 aa).

A glycan (N-linked (GlcNAc...) asparagine) is linked at Asn5. Residues 111–131 (ILIIGAGFGGLLFAVRLIQTG) traverse the membrane as a helical segment. FAD-binding positions include 150–153 (TWYW), 162–163 (DT), and Tyr168. An NADP(+)-binding site is contributed by 160 to 162 (MCD). N-linked (GlcNAc...) asparagine glycosylation is present at Asn286. NADP(+) contacts are provided by residues 310-316 (TGASAVQ) and 333-334 (RT). Residues Asn525 and Asn572 are each glycosylated (N-linked (GlcNAc...) asparagine).

It belongs to the FAD-binding monooxygenase family. FAD serves as cofactor.

The protein resides in the membrane. The catalysed reaction is preaustinoid A + AH2 + O2 = preaustinoid A1 + A + H2O. It functions in the pathway secondary metabolite biosynthesis; terpenoid biosynthesis. FAD-binding monooxygenase; part of the gene cluster A that mediates the biosynthesis of austinol and dehydroaustinol, two fungal meroterpenoids. The first step of the pathway is the synthesis of 3,5-dimethylorsellinic acid by the polyketide synthase ausA. 3,5-dimethylorsellinic acid is then prenylated by the polyprenyl transferase ausN. Further epoxidation by the FAD-dependent monooxygenase ausM and cyclization by the probable terpene cyclase ausL lead to the formation of protoaustinoid A. Protoaustinoid A is then oxidized to spiro-lactone preaustinoid A3 by the combined action of the FAD-binding monooxygenases ausB and ausC, and the dioxygenase ausE. Acid-catalyzed keto-rearrangement and ring contraction of the tetraketide portion of preaustinoid A3 by ausJ lead to the formation of preaustinoid A4. The aldo-keto reductase ausK, with the help of ausH, is involved in the next step by transforming preaustinoid A4 into isoaustinone which is in turn hydroxylated by the P450 monooxygenase ausI to form austinolide. Finally, the cytochrome P450 monooxygenase ausG modifies austinolide to austinol. Austinol can be further modified to dehydroaustinol which forms a diffusible complex with diorcinol that initiates conidiation. Due to genetic rearrangements of the clusters and the subsequent loss of some enzymes, the end products of the Emericella nidulans austinoid biosynthesis clusters are austinol and dehydroaustinol, even if additional enzymes, such as the O-acetyltransferase ausQ and the cytochrome P450 monooxygenase ausR are still functional. The sequence is that of FAD-binding monooxygenase ausC from Emericella nidulans (strain FGSC A4 / ATCC 38163 / CBS 112.46 / NRRL 194 / M139) (Aspergillus nidulans).